A 1034-amino-acid polypeptide reads, in one-letter code: Potassium-transporting ATPase alpha chain 1 (1034 aa).

The Cytoplasmic portion of the chain corresponds to 1–97; it reads MGKAENYEMY…NALRPPRGTP (97 aa). A phosphotyrosine mark is found at Tyr-7 and Tyr-10. The interval 14–41 is disordered; that stretch reads LGPGPGGDMAAKMSKKKAGKGGGKKKEK. Positions 26–39 are enriched in basic residues; it reads MSKKKAGKGGGKKK. Ser-27 is subject to Phosphoserine. The chain crosses the membrane as a helical span at residues 98 to 118; the sequence is EYVKFARQLAGGLQCLMWVAA. Over 119–141 the chain is Lumenal; it reads AICLIAFAIQASEGDLTTDDNLY. The helical transmembrane segment at 142-162 threads the bilayer; that stretch reads LALALIAVVVVTGCFGYYQEF. Residues 163–298 lie on the Cytoplasmic side of the membrane; sequence KSTNIIASFK…NEKTPIAIEI (136 aa). Positions 225-239 are enriched in polar residues; that stretch reads NSSLTGESEPQTRSP. Residues 225–245 are disordered; that stretch reads NSSLTGESEPQTRSPECTHES. Residues 299–318 traverse the membrane as a helical segment; the sequence is EHFVDIIAGLAILFGATFFV. Topologically, residues 319–330 are lumenal; the sequence is VAMCIGYTFLRA. Residues 331–348 form a helical membrane-spanning segment; sequence MVFFMAIVVAYVPEGLLA. The K(+) site is built by Val-339, Ala-340, Val-342, and Glu-344. Over 349 to 782 the chain is Cytoplasmic; that stretch reads TVTVCLSLTA…EQGRLIFDNL (434 aa). Asp-386 serves as the catalytic 4-aspartylphosphate intermediate. Asp-386 and Thr-388 together coordinate Mg(2+). A phosphoserine mark is found at Ser-462 and Ser-600. Positions 727 and 731 each coordinate Mg(2+). Residues 783–802 form a helical membrane-spanning segment; that stretch reads KKSIAYTLTKNIPELTPYLI. Residue Glu-796 coordinates K(+). Topologically, residues 803-812 are lumenal; it reads YITVSVPLPL. A helical membrane pass occupies residues 813–833; the sequence is GCITILFIELCTDIFPSVSLA. Glu-821 is a K(+) binding site. The Cytoplasmic segment spans residues 834-853; the sequence is YEKAESDIMHLRPRNPKRDR. Ser-839 is modified (phosphoserine). Residues 854 to 876 form a helical membrane-spanning segment; sequence LVNEPLAAYSYFQIGAIQSFAGF. Residues 877-928 lie on the Lumenal side of the membrane; sequence TDYFTAMAQEGWFPLLCVGLRPYWENHHLQDLQDSYGQEWTFGQRLYQQYTC. The chain crosses the membrane as a helical span at residues 929 to 948; it reads YTVFFISIEMCQIADVLIRK. Over 949 to 962 the chain is Cytoplasmic; the sequence is TRRLSAFQQGFFRN. At Ser-953 the chain carries Phosphoserine; by PKA. The helical transmembrane segment at 963–981 threads the bilayer; the sequence is RILVIAIVFQVCIGCFLCY. The Lumenal portion of the chain corresponds to 982 to 996; the sequence is CPGMPNIFNFMPIRY. Residues 997–1017 form a helical membrane-spanning segment; sequence QWWLVPMPFGLLIFVYDEIRK. Residues 1018–1034 lie on the Cytoplasmic side of the membrane; the sequence is LGVRCCPGSWWDQELYY.

Belongs to the cation transport ATPase (P-type) (TC 3.A.3) family. Type IIC subfamily. The gastric H(+)/K(+) ATPase pump is composed of the catalytic alpha subunit ATP4A and the regulatory beta subunit ATP4B. Interacts (via the P-domain) with ATP4B (via N-terminus); this interaction stabilizes the lumenal-open E2 conformation state and prevents the reverse reaction of the transport cycle.

The protein localises to the apical cell membrane. It carries out the reaction K(+)(out) + ATP + H2O + H(+)(in) = K(+)(in) + ADP + phosphate + 2 H(+)(out). The catalytic subunit of the gastric H(+)/K(+) ATPase pump which transports H(+) ions in exchange for K(+) ions across the apical membrane of parietal cells. Uses ATP as an energy source to pump H(+) ions to the gastric lumen while transporting K(+) ion from the lumen into the cell. Remarkably generates a million-fold proton gradient across the gastric parietal cell membrane, acidifying the gastric juice down to pH 1. Within a transport cycle, the transfer of a H(+) ion across the membrane is coupled to ATP hydrolysis and is associated with a transient phosphorylation that shifts the pump conformation from inward-facing (E1) to outward-facing state (E2). The release of the H(+) ion in the stomach lumen is followed by binding of K(+) ion converting the pump conformation back to the E1 state. The polypeptide is Potassium-transporting ATPase alpha chain 1 (ATP4A) (Canis lupus familiaris (Dog)).